The primary structure comprises 93 residues: Defensin-like protein 229 (93 aa).

Residues 1–19 (MKSTTLFMVSCVLIFCVLS) form the signal peptide. 4 disulfides stabilise this stretch: cysteine 38-cysteine 93, cysteine 48-cysteine 72, cysteine 56-cysteine 84, and cysteine 70-cysteine 86.

It belongs to the DEFL family. As to expression, flower buds.

The protein localises to the secreted. In Arabidopsis thaliana (Mouse-ear cress), this protein is Defensin-like protein 229 (SCRL27).